The sequence spans 317 residues: tRNA-dihydrouridine(20a/20b) synthase [NAD(P)+]-like (317 aa).

Residues 33–35 (PMV) and Gln-87 contribute to the FMN site. Catalysis depends on Cys-116, which acts as the Proton donor. FMN is bound by residues Lys-158, His-186, 216–218 (NGD), and 240–241 (AR).

This sequence belongs to the Dus family. Dus4 subfamily. Requires FMN as cofactor.

It catalyses the reaction 5,6-dihydrouridine(20a) in tRNA + NADP(+) = uridine(20a) in tRNA + NADPH + H(+). The catalysed reaction is 5,6-dihydrouridine(20a) in tRNA + NAD(+) = uridine(20a) in tRNA + NADH + H(+). The enzyme catalyses 5,6-dihydrouridine(20b) in tRNA + NAD(+) = uridine(20b) in tRNA + NADH + H(+). It carries out the reaction 5,6-dihydrouridine(20b) in tRNA + NADP(+) = uridine(20b) in tRNA + NADPH + H(+). Functionally, catalyzes the synthesis of dihydrouridine, a modified base found in the D-loop of most tRNAs. This Homo sapiens (Human) protein is tRNA-dihydrouridine(20a/20b) synthase [NAD(P)+]-like (DUS4L).